The primary structure comprises 197 residues: Protein SPMIP2 (197 aa).

Positions 161–197 are disordered; sequence SKAALPIGSRPPKLPKLPKKEEKSKFRPLHQHDARCY. The span at 178-197 shows a compositional bias: basic and acidic residues; sequence PKKEEKSKFRPLHQHDARCY.

The chain is Protein SPMIP2 (SPMIP2) from Bos taurus (Bovine).